We begin with the raw amino-acid sequence, 151 residues long: Large ribosomal subunit protein bL17 (151 aa).

Residues 118-151 (EAKQPPRKEKAKKPAPVQAEEASATPASEEKAQD) are disordered. Positions 131 to 144 (PAPVQAEEASATPA) are enriched in low complexity.

It belongs to the bacterial ribosomal protein bL17 family. As to quaternary structure, part of the 50S ribosomal subunit. Contacts protein L32.

The protein is Large ribosomal subunit protein bL17 of Syntrophobacter fumaroxidans (strain DSM 10017 / MPOB).